The following is a 163-amino-acid chain: Regulatory protein RecX (163 aa).

Residues 1 to 21 (MSDAEDIPTGRKRRPREQTPV) are disordered.

The protein belongs to the RecX family.

Its subcellular location is the cytoplasm. Its function is as follows. Modulates RecA activity. This chain is Regulatory protein RecX, found in Stenotrophomonas maltophilia (strain R551-3).